A 458-amino-acid chain; its full sequence is UPF0210 protein MMP1427 (458 aa).

It belongs to the UPF0210 family.

The polypeptide is UPF0210 protein MMP1427 (Methanococcus maripaludis (strain DSM 14266 / JCM 13030 / NBRC 101832 / S2 / LL)).